The primary structure comprises 342 residues: Ribosomal RNA small subunit methyltransferase C (342 aa).

The protein belongs to the methyltransferase superfamily. RsmC family. In terms of assembly, monomer.

It is found in the cytoplasm. The catalysed reaction is guanosine(1207) in 16S rRNA + S-adenosyl-L-methionine = N(2)-methylguanosine(1207) in 16S rRNA + S-adenosyl-L-homocysteine + H(+). Functionally, specifically methylates the guanine in position 1207 of 16S rRNA in the 30S particle. This chain is Ribosomal RNA small subunit methyltransferase C, found in Salmonella typhi.